We begin with the raw amino-acid sequence, 149 residues long: Flagellar assembly factor FliW (149 aa).

Belongs to the FliW family. Interacts with translational regulator CsrA and flagellin(s).

Its subcellular location is the cytoplasm. Its function is as follows. Acts as an anti-CsrA protein, binds CsrA and prevents it from repressing translation of its target genes, one of which is flagellin. Binds to flagellin and participates in the assembly of the flagellum. This chain is Flagellar assembly factor FliW, found in Thermotoga neapolitana (strain ATCC 49049 / DSM 4359 / NBRC 107923 / NS-E).